Reading from the N-terminus, the 453-residue chain is Ribosome biogenesis protein YTM1 (453 aa).

The ubiquitin-like (UBL) domain stretch occupies residues 8-89 (VKLRFFTREQ…ETFLNVEYTR (82 aa)). The sufficient for interaction with ERB1 and association with 66S pre-ribosomes stretch occupies residues 99–453 (SFSNEDWVSS…INKGDNIFKS (355 aa)). WD repeat units lie at residues 101–139 (SNED…EKQY), 141–179 (GHSA…LKQP), 199–237 (GHKA…MTVV), 278–318 (SHTG…CIDT), 320–359 (TTSY…TSKI), 366–406 (GHKN…PMYT), and 417–453 (GVND…IFKS).

Belongs to the WD repeat WDR12/YTM1 family. Component of the NOP7 complex, composed of ERB1, NOP7 and YTM1. The complex is held together by ERB1, which interacts with NOP7 via its N-terminal domain and with YTM1 via a high-affinity interaction between the seven-bladed beta-propeller domains of the 2 proteins. The NOP7 complex associates with the 66S pre-ribosome. Interacts (via UBL domain) with MDN1 (via VWFA/MIDAS domain).

The protein localises to the nucleus. The protein resides in the nucleolus. Its subcellular location is the nucleoplasm. Functionally, component of the NOP7 complex, which is required for maturation of the 25S and 5.8S ribosomal RNAs and formation of the 60S ribosome. This Vanderwaltozyma polyspora (strain ATCC 22028 / DSM 70294 / BCRC 21397 / CBS 2163 / NBRC 10782 / NRRL Y-8283 / UCD 57-17) (Kluyveromyces polysporus) protein is Ribosome biogenesis protein YTM1.